The chain runs to 490 residues: 3-octaprenyl-4-hydroxybenzoate carboxy-lyase (490 aa).

Position 172 (Asn-172) interacts with Mn(2+). Residues 175–177 (IYR), 189–191 (RWL), and 194–195 (RG) contribute to the prenylated FMN site. Mn(2+) is bound at residue Glu-238. Asp-287 (proton donor) is an active-site residue.

Belongs to the UbiD family. Homohexamer. Prenylated FMN is required as a cofactor. Mn(2+) serves as cofactor.

The protein resides in the cell membrane. The enzyme catalyses a 4-hydroxy-3-(all-trans-polyprenyl)benzoate + H(+) = a 2-(all-trans-polyprenyl)phenol + CO2. Its pathway is cofactor biosynthesis; ubiquinone biosynthesis. Its function is as follows. Catalyzes the decarboxylation of 3-octaprenyl-4-hydroxy benzoate to 2-octaprenylphenol, an intermediate step in ubiquinone biosynthesis. This Saccharophagus degradans (strain 2-40 / ATCC 43961 / DSM 17024) protein is 3-octaprenyl-4-hydroxybenzoate carboxy-lyase.